The following is a 301-amino-acid chain: MYGWVNLDKPCGMSSALAVNLVKRILNVKKAGHAGTLDPLASGVLPIAIGEATKVMPYAVDVIKSYLFTVQWGEQRTTDDAEGEIVDKSDMIPCVENIKKIIPDFIGLLKQVPPSFSAVHVNGVRAFELARSGQDVNLSSRFVDVLELKLLSFDVENNKADFYLSCRKGVYVRSIARDLGIKLGCLGYVTKLQRVRVGCFRKKNAITLEMLKTLYSTNCKSSYLLPLWYVLQDIKHLNNFFSELEIKKLKNGQNIELNNLYVIRNCDICYVSTGNVPVAICSIVNSVVRPVRIFNVRGLVF.

Aspartate 38 functions as the Nucleophile in the catalytic mechanism.

This sequence belongs to the pseudouridine synthase TruB family. Type 1 subfamily.

It carries out the reaction uridine(55) in tRNA = pseudouridine(55) in tRNA. Functionally, responsible for synthesis of pseudouridine from uracil-55 in the psi GC loop of transfer RNAs. The protein is tRNA pseudouridine synthase B of Ehrlichia canis (strain Jake).